The following is a 652-amino-acid chain: Leucine aminopeptidase 2 (652 aa).

Residues 165-167 (QLE) and 293-298 (PYGGME) each bind a peptide. Residue H322 participates in Zn(2+) binding. Residue E323 is the Proton acceptor of the active site. The Zn(2+) site is built by H326 and E345. Y411 acts as the Proton donor in catalysis.

Belongs to the peptidase M1 family. It depends on Zn(2+) as a cofactor.

It is found in the cytoplasm. It localises to the nucleus. The enzyme catalyses an epoxide + H2O = an ethanediol. Its function is as follows. Aminopeptidase that preferentially cleaves di- and tripeptides. Also has low epoxide hydrolase activity (in vitro). Can hydrolyze the epoxide leukotriene LTA(4) but it forms preferentially 5,6-dihydroxy-7,9,11,14-eicosatetraenoic acid rather than the cytokine leukotriene B(4) as the product compared to the homologous mammalian enzyme (in vitro). This chain is Leucine aminopeptidase 2, found in Candida glabrata (strain ATCC 2001 / BCRC 20586 / JCM 3761 / NBRC 0622 / NRRL Y-65 / CBS 138) (Yeast).